The sequence spans 157 residues: MVKRILGLDPGLATLGFGSITVQPDESLQVLDFGVIKTAAGEEIGSRLLTIYEDLHTLLQHFQPDLVAIEKFFFYRMSNTILVAQARGVILLVLAQHHLALMEFTPAQVKQTLTGHGNADKQEVQLAVQRELKLESLPRPDDAADALALALTASFQR.

Catalysis depends on residues aspartate 9, glutamate 70, and aspartate 142. 3 residues coordinate Mg(2+): aspartate 9, glutamate 70, and aspartate 142.

This sequence belongs to the RuvC family. Homodimer which binds Holliday junction (HJ) DNA. The HJ becomes 2-fold symmetrical on binding to RuvC with unstacked arms; it has a different conformation from HJ DNA in complex with RuvA. In the full resolvosome a probable DNA-RuvA(4)-RuvB(12)-RuvC(2) complex forms which resolves the HJ. Mg(2+) serves as cofactor.

It is found in the cytoplasm. The catalysed reaction is Endonucleolytic cleavage at a junction such as a reciprocal single-stranded crossover between two homologous DNA duplexes (Holliday junction).. In terms of biological role, the RuvA-RuvB-RuvC complex processes Holliday junction (HJ) DNA during genetic recombination and DNA repair. Endonuclease that resolves HJ intermediates. Cleaves cruciform DNA by making single-stranded nicks across the HJ at symmetrical positions within the homologous arms, yielding a 5'-phosphate and a 3'-hydroxyl group; requires a central core of homology in the junction. The consensus cleavage sequence is 5'-(A/T)TT(C/G)-3'. Cleavage occurs on the 3'-side of the TT dinucleotide at the point of strand exchange. HJ branch migration catalyzed by RuvA-RuvB allows RuvC to scan DNA until it finds its consensus sequence, where it cleaves and resolves the cruciform DNA. This is Crossover junction endodeoxyribonuclease RuvC from Cyanothece sp. (strain PCC 7425 / ATCC 29141).